We begin with the raw amino-acid sequence, 407 residues long: Phosphopentomutase (407 aa).

Asp-10, Asp-306, His-311, Asp-347, His-348, and His-359 together coordinate Mn(2+).

Belongs to the phosphopentomutase family. Mn(2+) is required as a cofactor.

The protein resides in the cytoplasm. It catalyses the reaction 2-deoxy-alpha-D-ribose 1-phosphate = 2-deoxy-D-ribose 5-phosphate. The enzyme catalyses alpha-D-ribose 1-phosphate = D-ribose 5-phosphate. It participates in carbohydrate degradation; 2-deoxy-D-ribose 1-phosphate degradation; D-glyceraldehyde 3-phosphate and acetaldehyde from 2-deoxy-alpha-D-ribose 1-phosphate: step 1/2. Functionally, isomerase that catalyzes the conversion of deoxy-ribose 1-phosphate (dRib-1-P) and ribose 1-phosphate (Rib-1-P) to deoxy-ribose 5-phosphate (dRib-5-P) and ribose 5-phosphate (Rib-5-P), respectively. This Yersinia pestis bv. Antiqua (strain Angola) protein is Phosphopentomutase.